Here is a 292-residue protein sequence, read N- to C-terminus: Xyloglucan endotransglucosylase/hydrolase protein 2 (292 aa).

The N-terminal stretch at 1–24 (MNRIRYCFELVSVLFLMFTANARA) is a signal peptide. Residues 25–219 (RGRGAIDFDV…WAYAPFKAQY (195 aa)) form the GH16 domain. Glu106 (nucleophile) is an active-site residue. Residue Glu110 is the Proton donor of the active site. Residues Glu110, 123 to 125 (QTN), 133 to 135 (GRE), 198 to 199 (NW), and Gly203 contribute to the xyloglucan site. 2 cysteine pairs are disulfide-bonded: Cys227-Cys239 and Cys275-Cys288. Arg280 contributes to the xyloglucan binding site.

The protein belongs to the glycosyl hydrolase 16 family. XTH group 1 subfamily. In terms of processing, contains at least one intrachain disulfide bond essential for its enzymatic activity.

It is found in the secreted. Its subcellular location is the cell wall. The protein resides in the extracellular space. It localises to the apoplast. It catalyses the reaction breaks a beta-(1-&gt;4) bond in the backbone of a xyloglucan and transfers the xyloglucanyl segment on to O-4 of the non-reducing terminal glucose residue of an acceptor, which can be a xyloglucan or an oligosaccharide of xyloglucan.. May catalyze xyloglucan endohydrolysis (XEH) and/or endotransglycosylation (XET). Cleaves and religates xyloglucan polymers, an essential constituent of the primary cell wall, and thereby participates in cell wall construction of growing tissues. In Arabidopsis thaliana (Mouse-ear cress), this protein is Xyloglucan endotransglucosylase/hydrolase protein 2 (XTH2).